A 360-amino-acid chain; its full sequence is Putative mRNA-decapping protein (360 aa).

The CCHC-type zinc-finger motif lies at 11 to 28; sequence HICSNCGRSGHEFRNCIE. Residues 163–347 form the Nudix hydrolase domain; the sequence is YKYDNILYHF…KKRILTRVYL (185 aa). Residues 242-264 carry the Nudix box motif; that stretch reads GRRDKRSEENMVCACREFEEETG. Glu-249 contacts Mg(2+). The active-site Nucleophile is Glu-258. Mg(2+) is bound at residue Glu-262.

It belongs to the Nudix hydrolase family. DIPP subfamily. Requires Mg(2+) as cofactor. Mn(2+) is required as a cofactor.

The enzyme catalyses diphospho-myo-inositol polyphosphate + H2O = myo-inositol polyphosphate + phosphate.. Functionally, might function as a decapping enzyme required for the removal of the 5'-end m7GpppN cap tethered to viral and host mRNAs to allow their decay in cells. In addition to the mRNA cap, probably also efficiently hydrolyzes diphosphoinositol polyphosphates. In Acanthamoeba polyphaga (Amoeba), this protein is Putative mRNA-decapping protein.